The chain runs to 482 residues: MKFIVKPHPEIFCKSDSVRKRFIKILDSNIRIMVKRVSESVAVYNRRYHIEVTANDDSDRDQILAILMQTPGIHHTLEVKQTEFKDLHDIFEQTLELVGEQLEGKTFCVRAKRRGQHDFTSIELERYVGGGLNQAVESASVKLKNPDITVRIEVDYDHLHQVLHRHKGLGGFPLGTQEDVLSLISGGFDSGVSSYLHIKRGSKVHYCFFNLGGPAHEIGVKQVSHFLWKKYGSSAKVKFISIDFEPVVAEILEKVDNGQMGVVLKRMFMRAAGQVAERYGIQALVTGEALGQVSSQTLTNLRMIDNVTDSLILRPLINWDKEDIIDIARNIGTEEFAKTMPEFCGVISKNPTIKAVKAKLEKEEANFDFAILDRVIEEARVMDIRDIEKQSQEQAPEIELVDQIGDGAIVLDIRSPDEEDESPLVIDGVEVKHLPFYKLATQFGDLDQDKEYLLYCDRGVMSRLQALYLTENGYGNIKVYRP.

Residues 61–165 enclose the THUMP domain; that stretch reads DQILAILMQT…YDHLHQVLHR (105 aa). Residues 183 to 184, Lys-265, Gly-287, and Gln-296 contribute to the ATP site; that span reads LI. The cysteines at positions 344 and 456 are disulfide-linked. A Rhodanese domain is found at 404–482; the sequence is IGDGAIVLDI…GYGNIKVYRP (79 aa). Cys-456 serves as the catalytic Cysteine persulfide intermediate.

It belongs to the ThiI family.

The protein localises to the cytoplasm. It carries out the reaction [ThiI sulfur-carrier protein]-S-sulfanyl-L-cysteine + a uridine in tRNA + 2 reduced [2Fe-2S]-[ferredoxin] + ATP + H(+) = [ThiI sulfur-carrier protein]-L-cysteine + a 4-thiouridine in tRNA + 2 oxidized [2Fe-2S]-[ferredoxin] + AMP + diphosphate. It catalyses the reaction [ThiS sulfur-carrier protein]-C-terminal Gly-Gly-AMP + S-sulfanyl-L-cysteinyl-[cysteine desulfurase] + AH2 = [ThiS sulfur-carrier protein]-C-terminal-Gly-aminoethanethioate + L-cysteinyl-[cysteine desulfurase] + A + AMP + 2 H(+). Its pathway is cofactor biosynthesis; thiamine diphosphate biosynthesis. Functionally, catalyzes the ATP-dependent transfer of a sulfur to tRNA to produce 4-thiouridine in position 8 of tRNAs, which functions as a near-UV photosensor. Also catalyzes the transfer of sulfur to the sulfur carrier protein ThiS, forming ThiS-thiocarboxylate. This is a step in the synthesis of thiazole, in the thiamine biosynthesis pathway. The sulfur is donated as persulfide by IscS. The sequence is that of tRNA sulfurtransferase from Photobacterium profundum (strain SS9).